Here is a 488-residue protein sequence, read N- to C-terminus: Multidrug resistance outer membrane protein MdtP (488 aa).

An N-terminal signal peptide occupies residues 1-23 (MINRQLSRLLLCSILGSTTLISG). Cysteine 24 carries the N-palmitoyl cysteine lipid modification. Cysteine 24 carries the S-diacylglycerol cysteine lipid modification.

This sequence belongs to the outer membrane factor (OMF) (TC 1.B.17) family. Could be part of a tripartite efflux system composed of MdtN, MdtO and MdtP.

Its subcellular location is the cell outer membrane. In terms of biological role, could be involved in resistance to puromycin, acriflavine and tetraphenylarsonium chloride. The polypeptide is Multidrug resistance outer membrane protein MdtP (mdtP) (Escherichia coli O157:H7).